The following is a 410-amino-acid chain: Enterobactin exporter EntS (410 aa).

Residues 1–21 (MNKQSWLLNLSLLKTHPAFRA) lie on the Cytoplasmic side of the membrane. Residues 22–42 (VFLARFISIVSLGLLGVAVPV) traverse the membrane as a helical segment. The Periplasmic segment spans residues 43 to 55 (QIQMMTHSTWQVG). The chain crosses the membrane as a helical span at residues 56–76 (LSVTLTGGAMFVGLMVGGVLA). At 77–83 (DRYERKK) the chain is on the cytoplasmic side. A helical transmembrane segment spans residues 84–104 (VILLARGTCGIGFIGLCLNAL). The Periplasmic segment spans residues 105–109 (LPEPS). The chain crosses the membrane as a helical span at residues 110–130 (LLAIYLLGLWDGFFASLGVTA). The Cytoplasmic segment spans residues 131-156 (LLAATSALVGRENLMQAGAITMLTVR). Residues 157-177 (LGSVISPMIGGLLLATGGVAW) form a helical membrane-spanning segment. Asn178 is a topological domain (periplasmic). A helical membrane pass occupies residues 179–199 (YGLAAAGTFITLLPLLSLPEL). Residues 200-218 (PPPPQPLEHPLKSLLAGFR) are Cytoplasmic-facing. A helical transmembrane segment spans residues 219 to 233 (FLLASPLLGGLLTMA). Topologically, residues 234–250 (SAVLVLYPALADNWQMS) are periplasmic. Residues 251–271 (AAQIGFLYAAIPLGAAIGALT) form a helical membrane-spanning segment. Residues 272–281 (SGKLAHSARP) lie on the Cytoplasmic side of the membrane. The helical transmembrane segment at 282 to 301 (GLLMLLSTLGSFLAIGLFGL) threads the bilayer. Residues 302 to 307 (MPMWIL) lie on the Periplasmic side of the membrane. The chain crosses the membrane as a helical span at residues 308–330 (GVVCLALFGWLSAVSSLLQYTML). The Cytoplasmic portion of the chain corresponds to 331–350 (QTQTPEAMLGRINGLWTAQN). The chain crosses the membrane as a helical span at residues 351-371 (VTGDAIGAALLGGLGAMMTPV). Ala372 is a topological domain (periplasmic). Residues 373–393 (SASASGFGLLIIGVLLLLVLV) form a helical membrane-spanning segment. Topologically, residues 394–410 (ELRRFRQTPPQVTASDS) are cytoplasmic.

This sequence belongs to the major facilitator superfamily. EntS (TC 2.A.1.38) family.

The protein localises to the cell inner membrane. In terms of biological role, component of an export pathway for enterobactin. The protein is Enterobactin exporter EntS of Shigella flexneri.